The following is a 1133-amino-acid chain: Probable cation-transporting ATPase 9 (1133 aa).

Residues 1-6 (MRVSSI) are Cytoplasmic-facing. A helical transmembrane segment spans residues 7–28 (EAEMENPIDVDKTDVEGELKIK). The Extracellular portion of the chain corresponds to 29–34 (QVTLLR). Residues 35 to 53 (ENIVKKIVFFLVAIFCSDR) traverse the membrane as a helical segment. Topologically, residues 54–167 (PSVLKKVFYE…IEINVPSFLT (114 aa)) are cytoplasmic. The helical transmembrane segment at 168-190 (LMWREFKKPINFLLYFGIIVWGI) threads the bilayer. The Extracellular segment spans residues 191–193 (EQM). A helical membrane pass occupies residues 194–212 (YVSTAITVVFTTTINSLIC). Over 213–363 (IYIRGVMQKL…PFNKKFQQQA (151 aa)) the chain is Cytoplasmic. The helical transmembrane segment at 364-383 (VKLTILMATLLLIGFLSTLS) threads the bilayer. Residues 384–396 (RLLDIELPPLFIA) are Extracellular-facing. Residues 397–418 (FRFLDILIYSAPPGMPMLIAIT) form a helical membrane-spanning segment. The Cytoplasmic segment spans residues 419 to 887 (NFVGLKRLKN…NSVEIFKGYL (469 aa)). The active-site 4-aspartylphosphate intermediate is the aspartate 451. 2 residues coordinate Mg(2+): aspartate 827 and aspartate 831. The helical transmembrane segment at 888-906 (QVALLRYLGFLTLAYFYSS) threads the bilayer. Residues 907 to 915 (YSSGQMDWQ) are Extracellular-facing. A helical membrane pass occupies residues 916-931 (ALASGYFLVYLILGCN). Over 932–948 (TPLKKLEKSVFDDNLFS) the chain is Cytoplasmic. Residues 949-972 (IYNVTSVLFGFTLHILSIVGCVES) form a helical membrane-spanning segment. Residues 973-994 (LHASPIYKEVNSLDAENNFQFE) are Extracellular-facing. Residues 995–1018 (TQHNTVLNFNILINFFYVIISNHI) form a helical membrane-spanning segment. At 1019–1030 (GKPMKDRYYKNT) the chain is on the cytoplasmic side. The chain crosses the membrane as a helical span at residues 1031–1050 (IAIYYDLGLIYTCKCMILQV). At 1051-1101 (LLILEHTHHGLIFLILLLDQEFSSSLTVQVYFSLPMNLFLPEEFSLNFTQE) the chain is on the extracellular side. The chain crosses the membrane as a helical span at residues 1102 to 1124 (VKKEKELLICNSSSTILEVDYNL). Topologically, residues 1125-1133 (RLNYFQQNF) are cytoplasmic.

The protein belongs to the cation transport ATPase (P-type) (TC 3.A.3) family. Type V subfamily.

It is found in the membrane. The enzyme catalyses ATP + H2O = ADP + phosphate + H(+). The polypeptide is Probable cation-transporting ATPase 9 (TPA9) (Tetrahymena thermophila).